A 55-amino-acid chain; its full sequence is Large ribosomal subunit protein bL33 (55 aa).

Belongs to the bacterial ribosomal protein bL33 family.

This chain is Large ribosomal subunit protein bL33, found in Buchnera aphidicola subsp. Baizongia pistaciae (strain Bp).